We begin with the raw amino-acid sequence, 124 residues long: Membrane magnesium transporter 2 (124 aa).

A topological domain (cytoplasmic) is located at residue Met-1. The chain crosses the membrane as a helical span at residues 2–22; it reads VAWLWKVLVGVGLSALAHAAF. The Lumenal segment spans residues 23–44; sequence SAAQHRSHTRLAEMKYEPLPTD. A helical membrane pass occupies residues 45–65; that stretch reads IVLQTLLAFALTCYGVVHTAG. Residues 66–124 are Cytoplasmic-facing; that stretch reads DFRDRDATSELKNVTFDTLRNRPSFYVFQHSGSSLLQPSDTTRSSNLNVPSSDDIRLKF.

This sequence belongs to the membrane magnesium transporter (TC 1.A.67) family.

The protein localises to the golgi apparatus membrane. Its subcellular location is the early endosome membrane. Mediates Mg(2+) transport. This chain is Membrane magnesium transporter 2, found in Rattus norvegicus (Rat).